Reading from the N-terminus, the 69-residue chain is Conotoxin Eb6.19 (69 aa).

The first 17 residues, 1–17 (VLIIAVLFLTACQLTTA), serve as a signal peptide directing secretion. A propeptide spanning residues 18–41 (ETYSRGRQKHRARRSTDKNSKWTR) is cleaved from the precursor. 3 cysteine pairs are disulfide-bonded: C43-C57, C50-C61, and C56-C68.

The protein belongs to the conotoxin O1 superfamily. Expressed by the venom duct.

It localises to the secreted. The sequence is that of Conotoxin Eb6.19 (E1) from Conus ebraeus (Hebrew cone).